Consider the following 582-residue polypeptide: Hydrogen peroxide stress regulator 1 (582 aa).

Disordered stretches follow at residues 24–55 (SPFA…HNSS), 107–154 (YPSA…GISK), 347–366 (TSYN…SGET), and 375–422 (NTSG…GGKS). Polar residues predominate over residues 107–125 (YPSASFSTSQHPSQVYNDG). Residues 126 to 143 (STLNSNNTTQQLNNNNGF) show a composition bias toward low complexity. A compositionally biased stretch (polar residues) spans 375-392 (NTSGRSPNSMEATEQIGT). The C2H2-type 1 zinc finger occupies 423–446 (FVCPECSKKFKRSEHLRRHIRSLH). A C2H2-type 2; atypical zinc finger spans residues 452-473 (FVCICGKRFSRRDNLRQHERLH).

The protein localises to the nucleus. Functionally, transcription factor that globally supports gene expression in response to hydrogen peroxide. This chain is Hydrogen peroxide stress regulator 1 (hsr1), found in Schizosaccharomyces pombe (strain 972 / ATCC 24843) (Fission yeast).